The sequence spans 161 residues: Putative outer membrane protein YedS (161 aa).

The signal sequence occupies residues 1 to 21; sequence MKRKVLAMLVPALLVAGAANA.

The protein belongs to the Gram-negative porin family.

It localises to the cell outer membrane. This is Putative outer membrane protein YedS (yedS) from Escherichia coli (strain K12).